The primary structure comprises 504 residues: MQTALVILDGWGLGDHDRRNAVQTASTPTFDRLIEKGANGTLDVSGRQVGLPAGQMGNSEVGHLNIGAGQVVKQAYTRVEDAIDNGSFQTNAAINAAFNHAVATNGRVHFMGLLSDGGVHSEQEHLHALIELAGDRNIDAITHVFTDGRDTNPHSSEQYLTTLEEVIHTHGTGDIATVSGRYYAMDRDKNWTRTRMSYDAIVNRTAEHTTSTALEAVSESYDRGDTDEFIEPTLIDNTPAVEDGDAVFVFNFRPDRVRQLVRMLADIDPAWSFETDPPTTELATMAQYDETFSLPVAFPPNEQHDTLGEVIATAGLTQLRIAESEKYAHVTYFLNGGREIAFEDERREIIKSPDVSTYDQQPSMSSNEVTDTAIEQINTTDPDVLILNYANPDMVGHTGDFTAAIEAIESVDTQLDRLLETIYAAGGHVIVTADHGNADNMGTAANPHTAHTTNPVPIVYTRPDGNGDGDTIRDGGSLCDIAPTVLELLSVEQPAAMTGSSLIE.

The Mn(2+) site is built by aspartate 9 and serine 59. Serine 59 acts as the Phosphoserine intermediate in catalysis. Substrate-binding positions include histidine 120, 149–150, arginine 181, arginine 187, 253–256, and lysine 326; these read RD and RPDR. Mn(2+) is bound by residues aspartate 393, histidine 397, aspartate 434, histidine 435, and histidine 451.

Belongs to the BPG-independent phosphoglycerate mutase family. Mn(2+) serves as cofactor.

The enzyme catalyses (2R)-2-phosphoglycerate = (2R)-3-phosphoglycerate. It participates in carbohydrate degradation; glycolysis; pyruvate from D-glyceraldehyde 3-phosphate: step 3/5. Its function is as follows. Catalyzes the interconversion of 2-phosphoglycerate and 3-phosphoglycerate. The chain is 2,3-bisphosphoglycerate-independent phosphoglycerate mutase from Haloquadratum walsbyi (strain DSM 16790 / HBSQ001).